Reading from the N-terminus, the 335-residue chain is ADP-L-glycero-D-manno-heptose-6-epimerase (335 aa).

Residues 11–12, 32–33, K39, 75–79, and N92 contribute to the NADP(+) site; these read FI, DD, and EGACS. Y139 acts as the Proton acceptor in catalysis. Residue K143 participates in NADP(+) binding. N172 contacts substrate. NADP(+) is bound by residues V173 and K181. K181 functions as the Proton acceptor in the catalytic mechanism. Residues R183, H190, 204 to 207, R217, and Y296 each bind substrate; that span reads FGDY.

The protein belongs to the NAD(P)-dependent epimerase/dehydratase family. HldD subfamily. In terms of assembly, homopentamer. It depends on NADP(+) as a cofactor.

The enzyme catalyses ADP-D-glycero-beta-D-manno-heptose = ADP-L-glycero-beta-D-manno-heptose. It participates in nucleotide-sugar biosynthesis; ADP-L-glycero-beta-D-manno-heptose biosynthesis; ADP-L-glycero-beta-D-manno-heptose from D-glycero-beta-D-manno-heptose 7-phosphate: step 4/4. In terms of biological role, catalyzes the interconversion between ADP-D-glycero-beta-D-manno-heptose and ADP-L-glycero-beta-D-manno-heptose via an epimerization at carbon 6 of the heptose. The chain is ADP-L-glycero-D-manno-heptose-6-epimerase from Polaromonas naphthalenivorans (strain CJ2).